A 142-amino-acid polypeptide reads, in one-letter code: Alpha-lactalbumin (142 aa).

The signal sequence occupies residues 1-19 (MMSFVSLLLVGILFHATQA). A C-type lysozyme domain is found at 20–142 (EQLTKCEVFQ…KLDQWLCEKL (123 aa)). Intrachain disulfides connect cysteine 25/cysteine 139, cysteine 47/cysteine 130, cysteine 80/cysteine 96, and cysteine 92/cysteine 110. N-linked (GlcNAc...) asparagine glycosylation is found at asparagine 64 and asparagine 93. Residues lysine 98, aspartate 101, aspartate 103, aspartate 106, and aspartate 107 each contribute to the Ca(2+) site.

The protein belongs to the glycosyl hydrolase 22 family. Lactose synthase (LS) is a heterodimer of a catalytic component, beta1,4-galactosyltransferase (beta4Gal-T1) and a regulatory component, alpha-lactalbumin (LA). Mammary gland specific. Secreted in milk.

The protein resides in the secreted. Its function is as follows. Regulatory subunit of lactose synthase, changes the substrate specificity of galactosyltransferase in the mammary gland making glucose a good acceptor substrate for this enzyme. This enables LS to synthesize lactose, the major carbohydrate component of milk. In other tissues, galactosyltransferase transfers galactose onto the N-acetylglucosamine of the oligosaccharide chains in glycoproteins. This chain is Alpha-lactalbumin (LALBA), found in Ovis aries (Sheep).